A 279-amino-acid polypeptide reads, in one-letter code: 3-methyl-2-oxobutanoate hydroxymethyltransferase (279 aa).

Residues Asp-43 and Asp-82 each contribute to the Mg(2+) site. Residues 43–44 (DS), Asp-82, and Lys-112 each bind 3-methyl-2-oxobutanoate. Residue Glu-114 participates in Mg(2+) binding. Glu-181 (proton acceptor) is an active-site residue.

It belongs to the PanB family. In terms of assembly, homodecamer; pentamer of dimers. Requires Mg(2+) as cofactor.

The protein resides in the cytoplasm. It carries out the reaction 3-methyl-2-oxobutanoate + (6R)-5,10-methylene-5,6,7,8-tetrahydrofolate + H2O = 2-dehydropantoate + (6S)-5,6,7,8-tetrahydrofolate. The protein operates within cofactor biosynthesis; (R)-pantothenate biosynthesis; (R)-pantoate from 3-methyl-2-oxobutanoate: step 1/2. In terms of biological role, catalyzes the reversible reaction in which hydroxymethyl group from 5,10-methylenetetrahydrofolate is transferred onto alpha-ketoisovalerate to form ketopantoate. The polypeptide is 3-methyl-2-oxobutanoate hydroxymethyltransferase (Exiguobacterium sibiricum (strain DSM 17290 / CCUG 55495 / CIP 109462 / JCM 13490 / 255-15)).